Reading from the N-terminus, the 117-residue chain is Ribosome-binding factor A (117 aa).

It belongs to the RbfA family. In terms of assembly, monomer. Binds 30S ribosomal subunits, but not 50S ribosomal subunits or 70S ribosomes.

It localises to the cytoplasm. One of several proteins that assist in the late maturation steps of the functional core of the 30S ribosomal subunit. Associates with free 30S ribosomal subunits (but not with 30S subunits that are part of 70S ribosomes or polysomes). Required for efficient processing of 16S rRNA. May interact with the 5'-terminal helix region of 16S rRNA. In Leptospira borgpetersenii serovar Hardjo-bovis (strain JB197), this protein is Ribosome-binding factor A.